Consider the following 128-residue polypeptide: 3-aminoacrylate deaminase RutC (128 aa).

It belongs to the RutC family.

The catalysed reaction is (Z)-3-aminoacrylate + H2O + H(+) = 3-oxopropanoate + NH4(+). Its function is as follows. Involved in pyrimidine catabolism. Catalyzes the deamination of 3-aminoacrylate to malonic semialdehyde, a reaction that can also occur spontaneously. RutC may facilitate the reaction and modulate the metabolic fitness, rather than catalyzing essential functions. The sequence is that of 3-aminoacrylate deaminase RutC from Pantoea ananatis (strain LMG 20103).